The chain runs to 559 residues: Poly(3-hydroxyalkanoate) polymerase 1 (559 aa).

The active site involves C296.

Belongs to the PHA/PHB synthase family. Type II PhaC subfamily.

It functions in the pathway biopolymer metabolism; poly-(R)-3-hydroxybutanoate biosynthesis. Its function is as follows. Synthesizes poly(3-hydroxyalkanoates) (PHA), complements a mutant of P.putida that does not make PHA. The polypeptide is Poly(3-hydroxyalkanoate) polymerase 1 (Ectopseudomonas oleovorans (Pseudomonas oleovorans)).